The chain runs to 296 residues: Galectin-3 (296 aa).

The span at 1 to 11 (MADSFSLNDAL) shows a compositional bias: polar residues. The segment at 1 to 150 (MADSFSLNDA…PSAPGAYPAA (150 aa)) is disordered. N-acetylalanine is present on Ala-2. Residues Ser-6 and Ser-12 each carry the phosphoserine; by CK1 modification. Low complexity-rich tracts occupy residues 12 to 31 (SGSGNPNPQGWPGPWGNQPA) and 38 to 47 (GASYPGAYPG). Tandem repeats lie at residues 36 to 44 (YPGASYPGA), 45 to 53 (YPGQAPPGG), 54 to 62 (YPGQAPPGG), 63 to 71 (YPGQAPPGG), 72 to 80 (YPGQAPPGG), 81 to 89 (YPGQAPPGG), 90 to 98 (YPGQAPPGG), and 99 to 107 (YPGQAPPGT). Positions 36–143 (YPGASYPGAY…AYPPPGQPSA (108 aa)) are 12 X 9 AA tandem repeats of Y-P-G-X(3)-P-G-[GAT]. Positions 48 to 120 (QAPPGGYPGQ…PTAPAYPGPT (73 aa)) are enriched in pro residues. A 9; approximate repeat occupies 108–115 (YPGPTAPA). The stretch at 116-124 (YPGPTAPGT) is repeat 10. Residues 121–133 (APGTQPGQPSGPG) show a composition bias toward low complexity. The 11; approximate repeat unit spans residues 125–134 (QPGQPSGPGA). One copy of the 12; approximate repeat lies at 135–143 (YPPPGQPSA). Positions 164–294 (YDLPLPGGVK…DIDLTSASYA (131 aa)) constitute a Galectin domain. 227–233 (WGKEERQ) contacts a beta-D-galactoside. The Nuclear export signal signature appears at 272–287 (KNLPEISKLGISGDID).

Probably forms homo- or heterodimers. Interacts with DMBT1. Interacts with CD6 and ALCAM. Forms a complex with the ITGA3, ITGB1 and CSPG4. Interacts with LGALS3BP, LYPD3, ZFTRAF1 and UACA. Interacts with TRIM16; this interaction mediates autophagy of damage endomembranes. Interacts with cargo receptor TMED10; the interaction mediates the translocation from the cytoplasm into the ERGIC (endoplasmic reticulum-Golgi intermediate compartment) and thereby secretion. Interacts with and inhibits by binding NCR3/NKp30. In terms of processing, the degree of phosphorylation is higher in the cytoplasmic form than in the nuclear form. In protein isolated from a canine kidney cell line, 90% of the phosphate was on Ser-6 and 10% was on Ser-12.

It localises to the cytoplasm. The protein resides in the nucleus. It is found in the secreted. Galactose-specific lectin which binds IgE. May mediate with the alpha-3, beta-1 integrin the stimulation by CSPG4 of endothelial cells migration. Together with DMBT1, required for terminal differentiation of columnar epithelial cells during early embryogenesis. In the nucleus: acts as a pre-mRNA splicing factor. Involved in acute inflammatory responses including neutrophil activation and adhesion, chemoattraction of monocytes macrophages, opsonization of apoptotic neutrophils, and activation of mast cells. Together with TRIM16, coordinates the recognition of membrane damage with mobilization of the core autophagy regulators ATG16L1 and BECN1 in response to damaged endomembranes. When secreted, interacts with NK cell-activating receptor NCR3/NKp30 acting as an inhibitory ligand which antagonizes NK cell attack. This Canis lupus familiaris (Dog) protein is Galectin-3 (LGALS3).